The sequence spans 448 residues: Trigger factor (448 aa).

The PPIase FKBP-type domain maps to 172 to 257 (GDRVTVDFVG…MKKIEWPHLP (86 aa)).

It belongs to the FKBP-type PPIase family. Tig subfamily.

The protein resides in the cytoplasm. The catalysed reaction is [protein]-peptidylproline (omega=180) = [protein]-peptidylproline (omega=0). Its function is as follows. Involved in protein export. Acts as a chaperone by maintaining the newly synthesized protein in an open conformation. Functions as a peptidyl-prolyl cis-trans isomerase. The polypeptide is Trigger factor (Paraburkholderia phymatum (strain DSM 17167 / CIP 108236 / LMG 21445 / STM815) (Burkholderia phymatum)).